Here is a 231-residue protein sequence, read N- to C-terminus: Large ribosomal subunit protein uL1 (231 aa).

The protein belongs to the universal ribosomal protein uL1 family. As to quaternary structure, part of the 50S ribosomal subunit.

Its function is as follows. Binds directly to 23S rRNA. The L1 stalk is quite mobile in the ribosome, and is involved in E site tRNA release. Functionally, protein L1 is also a translational repressor protein, it controls the translation of the L11 operon by binding to its mRNA. This is Large ribosomal subunit protein uL1 from Hydrogenovibrio crunogenus (strain DSM 25203 / XCL-2) (Thiomicrospira crunogena).